The primary structure comprises 978 residues: Glycine dehydrogenase (decarboxylating) (978 aa).

The residue at position 726 (Lys726) is an N6-(pyridoxal phosphate)lysine.

This sequence belongs to the GcvP family. As to quaternary structure, the glycine cleavage system is composed of four proteins: P, T, L and H. Pyridoxal 5'-phosphate serves as cofactor.

It carries out the reaction N(6)-[(R)-lipoyl]-L-lysyl-[glycine-cleavage complex H protein] + glycine + H(+) = N(6)-[(R)-S(8)-aminomethyldihydrolipoyl]-L-lysyl-[glycine-cleavage complex H protein] + CO2. The glycine cleavage system catalyzes the degradation of glycine. The P protein binds the alpha-amino group of glycine through its pyridoxal phosphate cofactor; CO(2) is released and the remaining methylamine moiety is then transferred to the lipoamide cofactor of the H protein. In Paraburkholderia xenovorans (strain LB400), this protein is Glycine dehydrogenase (decarboxylating).